A 319-amino-acid chain; its full sequence is Glycine--tRNA ligase alpha subunit (319 aa).

This sequence belongs to the class-II aminoacyl-tRNA synthetase family. As to quaternary structure, tetramer of two alpha and two beta subunits.

The protein localises to the cytoplasm. It catalyses the reaction tRNA(Gly) + glycine + ATP = glycyl-tRNA(Gly) + AMP + diphosphate. In Oenococcus oeni (strain ATCC BAA-331 / PSU-1), this protein is Glycine--tRNA ligase alpha subunit.